The following is a 305-amino-acid chain: Glycine cleavage system transcriptional activator (305 aa).

An HTH lysR-type domain is found at 6–63 (PPLNALRVFDAAARHLSFTRAAEELFVTQAAVSHQIKSLEDFLGLKLFRRRNRSLLLT). The segment at residues 23–42 (FTRAAEELFVTQAAVSHQIK) is a DNA-binding region (H-T-H motif).

Belongs to the LysR transcriptional regulatory family.

Its subcellular location is the cytoplasm. Functionally, regulatory protein for the glycine cleavage system operon (gcv). Mediates activation of gcv by glycine and repression by purines. GcvA is negatively autoregulated. Binds to three sites upstream of the gcv promoter. The polypeptide is Glycine cleavage system transcriptional activator (gcvA) (Escherichia coli O157:H7).